A 144-amino-acid chain; its full sequence is Maximins 3/H2 (144 aa).

Positions 1–18 (MNFKYIVAVSFLIASAYA) are cleaved as a signal peptide. 2 propeptides span residues 19–43 (RSVQNDEQSLSQRDVLEEESLREIR) and 74–123 (TAEE…KEKR). Isoleucine 143 is subject to Isoleucine amide.

This sequence belongs to the bombinin family. In terms of tissue distribution, expressed by the skin glands.

It is found in the secreted. Maximin-3 shows antibacterial activity against both Gram-positive and Gram-negative bacteria. It also shows antimicrobial activity against the fungus C.albicans, but not against A.flavus nor P.uticale. It has little hemolytic activity. It possess a significant cytotoxicity against tumor cell lines. It possess a significant anti-HIV activity. It shows high spermicidal activity. Functionally, maximin-H2 shows antibacterial activity against both Gram-positive and Gram-negative bacteria. It also shows antimicrobial activity against the fungus C.albicans. Shows strong hemolytic activity. The polypeptide is Maximins 3/H2 (Bombina maxima (Giant fire-bellied toad)).